A 277-amino-acid polypeptide reads, in one-letter code: Formamidopyrimidine-DNA glycosylase (277 aa).

Catalysis depends on Pro-2, which acts as the Schiff-base intermediate with DNA. The active-site Proton donor is Glu-3. Catalysis depends on Lys-58, which acts as the Proton donor; for beta-elimination activity. Positions 97, 116, and 158 each coordinate DNA. The FPG-type zinc finger occupies 243–277; it reads NVYGRAGAPCPRCGRSIRQRRIAQRSTWYCPGCQR. Arg-267 acts as the Proton donor; for delta-elimination activity in catalysis.

This sequence belongs to the FPG family. As to quaternary structure, monomer. The cofactor is Zn(2+).

The enzyme catalyses Hydrolysis of DNA containing ring-opened 7-methylguanine residues, releasing 2,6-diamino-4-hydroxy-5-(N-methyl)formamidopyrimidine.. The catalysed reaction is 2'-deoxyribonucleotide-(2'-deoxyribose 5'-phosphate)-2'-deoxyribonucleotide-DNA = a 3'-end 2'-deoxyribonucleotide-(2,3-dehydro-2,3-deoxyribose 5'-phosphate)-DNA + a 5'-end 5'-phospho-2'-deoxyribonucleoside-DNA + H(+). Its function is as follows. Involved in base excision repair of DNA damaged by oxidation or by mutagenic agents. Acts as a DNA glycosylase that recognizes and removes damaged bases. Has a preference for oxidized purines, such as 7,8-dihydro-8-oxoguanine (8-oxoG). Has AP (apurinic/apyrimidinic) lyase activity and introduces nicks in the DNA strand. Cleaves the DNA backbone by beta-delta elimination to generate a single-strand break at the site of the removed base with both 3'- and 5'-phosphates. This is Formamidopyrimidine-DNA glycosylase from Alkalilimnicola ehrlichii (strain ATCC BAA-1101 / DSM 17681 / MLHE-1).